The following is a 146-amino-acid chain: Snaclec 5 (146 aa).

Residues 1–23 form the signal peptide; sequence MGRFIFISFGLLVVFLSLSGTEA. 3 disulfides stabilise this stretch: cysteine 25–cysteine 36, cysteine 53–cysteine 142, and cysteine 119–cysteine 134. A C-type lectin domain is found at 32-143; the sequence is YEGHCYRVFD…CRNYGHFVCK (112 aa).

The protein belongs to the snaclec family. In terms of assembly, heterodimer; disulfide-linked. Expressed by the venom gland.

It is found in the secreted. Interferes with one step of hemostasis (modulation of platelet aggregation, or coagulation cascade, for example). This chain is Snaclec 5, found in Echis pyramidum leakeyi (Leakey's carpet viper).